The chain runs to 317 residues: Ribosomal protein L11 methyltransferase (317 aa).

S-adenosyl-L-methionine-binding residues include Thr-158, Gly-179, Asp-201, and Asn-244.

This sequence belongs to the methyltransferase superfamily. PrmA family.

The protein localises to the cytoplasm. The enzyme catalyses L-lysyl-[protein] + 3 S-adenosyl-L-methionine = N(6),N(6),N(6)-trimethyl-L-lysyl-[protein] + 3 S-adenosyl-L-homocysteine + 3 H(+). In terms of biological role, methylates ribosomal protein L11. The polypeptide is Ribosomal protein L11 methyltransferase (Streptococcus pyogenes serotype M3 (strain ATCC BAA-595 / MGAS315)).